Consider the following 263-residue polypeptide: Probable septum site-determining protein MinC (263 aa).

Positions 107–159 (LPPSGARERPLDIKDSAPRKPAEEPSPSAGEARPEPAKAEEKPAEPVSRPTKV) are disordered. 2 stretches are compositionally biased toward basic and acidic residues: residues 112–129 (ARERPLDIKDSAPRKPAE) and 138–150 (ARPEPAKAEEKPA).

The protein belongs to the MinC family. Interacts with MinD and FtsZ.

Cell division inhibitor that blocks the formation of polar Z ring septums. Rapidly oscillates between the poles of the cell to destabilize FtsZ filaments that have formed before they mature into polar Z rings. Prevents FtsZ polymerization. The chain is Probable septum site-determining protein MinC from Pseudomonas aeruginosa (strain LESB58).